Reading from the N-terminus, the 188-residue chain is Protein SYC1 (188 aa).

In terms of assembly, component of the cleavage and polyadenylation factor (CPF) complex, which is composed of at least PTI1, SYC1, SSU72, GLC7, MPE1, REF2, PFS2, PTA1, YSH1/BRR5, SWD2, CFT2/YDH1, YTH1, CFT1/YHH1, FIP1 and PAP1. Component of the APT complex, which is a subcomplex of CPF, and is composed of PTI1, SYC1, SSU72, GLC7, REF2, PTA1 and SWD2.

The protein localises to the nucleus. Its function is as follows. Component of the cleavage and polyadenylation factor (CPF) complex, which plays a key role in polyadenylation-dependent pre-mRNA 3'-end formation and cooperates with cleavage factors including the CFIA complex and NAB4/CFIB. Component of the APT complex, which may be involved in polyadenylation-independent transcript 3'-end formation, including snoRNAs and snRNAs. The polypeptide is Protein SYC1 (SYC1) (Saccharomyces cerevisiae (strain ATCC 204508 / S288c) (Baker's yeast)).